Here is a 246-residue protein sequence, read N- to C-terminus: Probable phosphatase PBPRB2022 (246 aa).

Zn(2+)-binding residues include H8, H10, H16, H41, E74, H102, H132, D193, and H195.

It belongs to the PHP family. The cofactor is Zn(2+).

The chain is Probable phosphatase PBPRB2022 from Photobacterium profundum (strain SS9).